Here is a 383-residue protein sequence, read N- to C-terminus: Probable indole-3-pyruvate monooxygenase YUCCA10 (383 aa).

FAD is bound at residue 9-14 (GAGPAG). An NADP(+)-binding site is contributed by 177-182 (GGGNSG).

The protein belongs to the FMO family. FAD is required as a cofactor.

It catalyses the reaction indole-3-pyruvate + NADPH + O2 + H(+) = (indol-3-yl)acetate + CO2 + NADP(+) + H2O. Its pathway is plant hormone metabolism; auxin biosynthesis. Involved in auxin biosynthesis. The protein is Probable indole-3-pyruvate monooxygenase YUCCA10 (YUC10) of Arabidopsis thaliana (Mouse-ear cress).